A 498-amino-acid polypeptide reads, in one-letter code: Early growth response protein 1 (498 aa).

Disordered regions lie at residues 137–203 (NASP…TASI) and 287–308 (PSRMRKYPNRPSKTPPHERPYA). The span at 139-163 (SPSSAPSSSPSSSSSSSQSPPLSCS) shows a compositional bias: low complexity. Residues 179-202 (FPNSSPELFPDQSPQPFQNASTAS) show a composition bias toward polar residues. C2H2-type zinc fingers lie at residues 307-331 (YACPVESCDRRFSRSDELTRHIRIH), 337-359 (FQCRICMRNFSRSDHLTTHIRTH), and 365-387 (FACDICGRKFARSDERKRHTKIH). The interval 378–422 (DERKRHTKIHLRQKDKKADKATPVSVASPVSSYSPSASTSYPSPV) is disordered. The segment covering 382–392 (RHTKIHLRQKD) has biased composition (basic residues). Over residues 398–422 (ATPVSVASPVSSYSPSASTSYPSPV) the composition is skewed to low complexity.

It belongs to the EGR C2H2-type zinc-finger protein family.

It is found in the nucleus. It localises to the cytoplasm. Its function is as follows. Transcriptional regulator. Recognizes and binds to the DNA sequence 5'-GCG(T/G)GGGCG-3'(EGR-site) in the promoter region of target genes. Binds double-stranded target DNA, irrespective of the cytosine methylation status. Regulates the transcription of numerous target genes, and thereby plays an important role in regulating the response to growth factors, DNA damage, and ischemia. Plays a role in the regulation of cell survival, proliferation and cell death. Mediates responses to ischemia and hypoxia; regulates the expression of proteins that are involved in inflammatory processes. Plays a role in regulating the expression of circadian clock genes. This is Early growth response protein 1 from Xenopus tropicalis (Western clawed frog).